Here is a 560-residue protein sequence, read N- to C-terminus: Proline--tRNA ligase (560 aa).

Belongs to the class-II aminoacyl-tRNA synthetase family. ProS type 1 subfamily. Homodimer.

It localises to the cytoplasm. It catalyses the reaction tRNA(Pro) + L-proline + ATP = L-prolyl-tRNA(Pro) + AMP + diphosphate. Its function is as follows. Catalyzes the attachment of proline to tRNA(Pro) in a two-step reaction: proline is first activated by ATP to form Pro-AMP and then transferred to the acceptor end of tRNA(Pro). As ProRS can inadvertently accommodate and process non-cognate amino acids such as alanine and cysteine, to avoid such errors it has two additional distinct editing activities against alanine. One activity is designated as 'pretransfer' editing and involves the tRNA(Pro)-independent hydrolysis of activated Ala-AMP. The other activity is designated 'posttransfer' editing and involves deacylation of mischarged Ala-tRNA(Pro). The misacylated Cys-tRNA(Pro) is not edited by ProRS. The sequence is that of Proline--tRNA ligase from Vesicomyosocius okutanii subsp. Calyptogena okutanii (strain HA).